Reading from the N-terminus, the 207-residue chain is Putative 3-methyladenine DNA glycosylase (207 aa).

This sequence belongs to the DNA glycosylase MPG family.

The chain is Putative 3-methyladenine DNA glycosylase from Listeria monocytogenes serovar 1/2a (strain ATCC BAA-679 / EGD-e).